A 257-amino-acid chain; its full sequence is RNA polymerase sigma-G factor (257 aa).

The Polymerase core binding motif lies at 66–79; sequence DLFQVGCIGLIKSI. Positions 228–247 form a DNA-binding region, H-T-H motif; it reads QMEVADEIGISQAQVSRLEK.

The protein belongs to the sigma-70 factor family.

Sigma factors are initiation factors that promote the attachment of RNA polymerase to specific initiation sites and are then released. This sigma factor is responsible for the expression of sporulation specific genes. This chain is RNA polymerase sigma-G factor (sigG), found in Clostridium acetobutylicum (strain ATCC 824 / DSM 792 / JCM 1419 / IAM 19013 / LMG 5710 / NBRC 13948 / NRRL B-527 / VKM B-1787 / 2291 / W).